Here is a 543-residue protein sequence, read N- to C-terminus: MAKELVFGKNARNKLLAGINKLADAVKVTVGPKGQNVILGRKFSNPLITNDGVTIAKEIELTDPLENIGAKVISVAAVSTNDIAGDGTTTATILAQEMTNRGVEAVNNGANPVNVRRGIEDASQLIITELDKRSKKINTNEEIEQVAAISSGSKEIGKLIAQAMALVGKNGVITTDDAKTINTTLETTEGIEFKGTYASPYMVSDQEKMEVVLDQPKILVSAMKINTIKEILPLLEGSMENGNPLLIVAPDFAEEVVTTLAVNKLRGTINVVAVKCNEYGERQKAALEDLAISTGTLAYNNELGGGFKDVTVNHLGEARRVQVAKEKTTVIGGKGSKETIQKHLDLLNGRLKQTTEKYDTDLLKERIAHLSQGVAVVRVGGATELAQKELKLRIEDALNSTKAAVEEGIISGGGIALLNVSTILNDSKLADKYKAETSAENLKEILVGYEIVRKSLEAPVRQIIENSGVNPVKVFAELRSEADGVGFDAETKKKVDMIRSGIIDPTKVTKTALEKAASVASSLITTSVAVYDIKENKEGSFQE.

ATP-binding positions include 29-32 (TVGP), 86-90 (DGTTT), Gly413, and Asp504.

It belongs to the chaperonin (HSP60) family. As to quaternary structure, forms a cylinder of 14 subunits composed of two heptameric rings stacked back-to-back. Interacts with the co-chaperonin GroES.

The protein resides in the cytoplasm. The enzyme catalyses ATP + H2O + a folded polypeptide = ADP + phosphate + an unfolded polypeptide.. In terms of biological role, together with its co-chaperonin GroES, plays an essential role in assisting protein folding. The GroEL-GroES system forms a nano-cage that allows encapsulation of the non-native substrate proteins and provides a physical environment optimized to promote and accelerate protein folding. This is Chaperonin GroEL from Mycoplasma pneumoniae (strain ATCC 29342 / M129 / Subtype 1) (Mycoplasmoides pneumoniae).